We begin with the raw amino-acid sequence, 367 residues long: Selenoprotein Pa (367 aa).

A signal peptide spans 1–19 (MWKALSLTLALCLLVGCSA). A non-standard amino acid (selenocysteine) is located at residue Sec-59. A glycan (N-linked (GlcNAc...) asparagine) is linked at Asn-109. A compositionally biased stretch (basic and acidic residues) spans 191–220 (EVNKPVEEEPRQDHGHHEHGHHEHQGEAER). Residues 191-241 (EVNKPVEEEPRQDHGHHEHGHHEHQGEAERHRHGHHHPHHHHHHHRGQQQV) form a disordered region. Residues 221 to 237 (HRHGHHHPHHHHHHHRG) are compositionally biased toward basic residues. 16 non-standard amino acids (selenocysteine) are found at residues Sec-267, Sec-273, Sec-279, Sec-290, Sec-292, Sec-294, Sec-310, Sec-320, Sec-322, Sec-336, Sec-338, Sec-346, Sec-353, Sec-355, Sec-362, and Sec-364. Residues 309–367 (LUHCDEPLPASUPUQGLKEQDNHIKETUQURPAPPAEUELSQPTUVUPAGDATUGURKK) are disordered. Residues 326–336 (KEQDNHIKETU) show a composition bias toward basic and acidic residues.

Belongs to the selenoprotein P family.

It is found in the secreted. Its function is as follows. Might be responsible for some of the extracellular antioxidant defense properties of selenium or might be involved in the transport of selenium. The chain is Selenoprotein Pa (sepp1a) from Danio rerio (Zebrafish).